The primary structure comprises 118 residues: Putative pterin-4-alpha-carbinolamine dehydratase (118 aa).

It belongs to the pterin-4-alpha-carbinolamine dehydratase family.

It catalyses the reaction (4aS,6R)-4a-hydroxy-L-erythro-5,6,7,8-tetrahydrobiopterin = (6R)-L-erythro-6,7-dihydrobiopterin + H2O. The protein is Putative pterin-4-alpha-carbinolamine dehydratase of Xanthomonas campestris pv. campestris (strain B100).